A 380-amino-acid chain; its full sequence is Queuine tRNA-ribosyltransferase (380 aa).

D96 acts as the Proton acceptor in catalysis. Substrate-binding positions include 96 to 100, D150, Q193, and G220; that span reads DSGGF. The tract at residues 251-257 is RNA binding; sequence GVGAPDS. D270 (nucleophile) is an active-site residue. The interval 275–279 is RNA binding; important for wobble base 34 recognition; it reads TRIAR. Residues C308, C310, C313, and H339 each contribute to the Zn(2+) site.

The protein belongs to the queuine tRNA-ribosyltransferase family. In terms of assembly, homodimer. Within each dimer, one monomer is responsible for RNA recognition and catalysis, while the other monomer binds to the replacement base PreQ1. It depends on Zn(2+) as a cofactor.

The catalysed reaction is 7-aminomethyl-7-carbaguanine + guanosine(34) in tRNA = 7-aminomethyl-7-carbaguanosine(34) in tRNA + guanine. It functions in the pathway tRNA modification; tRNA-queuosine biosynthesis. Its function is as follows. Catalyzes the base-exchange of a guanine (G) residue with the queuine precursor 7-aminomethyl-7-deazaguanine (PreQ1) at position 34 (anticodon wobble position) in tRNAs with GU(N) anticodons (tRNA-Asp, -Asn, -His and -Tyr). Catalysis occurs through a double-displacement mechanism. The nucleophile active site attacks the C1' of nucleotide 34 to detach the guanine base from the RNA, forming a covalent enzyme-RNA intermediate. The proton acceptor active site deprotonates the incoming PreQ1, allowing a nucleophilic attack on the C1' of the ribose to form the product. After dissociation, two additional enzymatic reactions on the tRNA convert PreQ1 to queuine (Q), resulting in the hypermodified nucleoside queuosine (7-(((4,5-cis-dihydroxy-2-cyclopenten-1-yl)amino)methyl)-7-deazaguanosine). The chain is Queuine tRNA-ribosyltransferase from Streptococcus pyogenes serotype M3 (strain ATCC BAA-595 / MGAS315).